The following is a 165-amino-acid chain: Ribosome maturation factor RimM (165 aa).

Positions 94–165 constitute a PRC barrel domain; the sequence is EDEFYIADLT…YVILNYQREA (72 aa).

It belongs to the RimM family. As to quaternary structure, binds ribosomal protein uS19.

The protein localises to the cytoplasm. Functionally, an accessory protein needed during the final step in the assembly of 30S ribosomal subunit, possibly for assembly of the head region. Essential for efficient processing of 16S rRNA. May be needed both before and after RbfA during the maturation of 16S rRNA. It has affinity for free ribosomal 30S subunits but not for 70S ribosomes. This chain is Ribosome maturation factor RimM, found in Rickettsia rickettsii (strain Sheila Smith).